We begin with the raw amino-acid sequence, 216 residues long: ATP-dependent Clp protease proteolytic subunit (216 aa).

Ser101 functions as the Nucleophile in the catalytic mechanism. Residue His126 is part of the active site.

The protein belongs to the peptidase S14 family. In terms of assembly, component of the chloroplastic Clp protease core complex.

The protein resides in the plastid. It localises to the chloroplast stroma. The enzyme catalyses Hydrolysis of proteins to small peptides in the presence of ATP and magnesium. alpha-casein is the usual test substrate. In the absence of ATP, only oligopeptides shorter than five residues are hydrolyzed (such as succinyl-Leu-Tyr-|-NHMec, and Leu-Tyr-Leu-|-Tyr-Trp, in which cleavage of the -Tyr-|-Leu- and -Tyr-|-Trp bonds also occurs).. In terms of biological role, cleaves peptides in various proteins in a process that requires ATP hydrolysis. Has a chymotrypsin-like activity. Plays a major role in the degradation of misfolded proteins. This Zea mays (Maize) protein is ATP-dependent Clp protease proteolytic subunit.